Reading from the N-terminus, the 284-residue chain is Heat stress transcription factor B-1 (284 aa).

Residues 12-106 (PAPFLSKTYQ…LLTDIRRRKS (95 aa)) mediate DNA binding. Residues 118–151 (VGSPSESNSGGGDDHGSSSTSSPGSSKNPGSVEN) are disordered. A compositionally biased stretch (low complexity) spans 134 to 148 (SSSTSSPGSSKNPGS). The segment at 147–192 (GSVENMVADLSGENEKLKRENNNLSSELAAAKKQRDELVTFLTGHL) is hydrophobic repeat HR-A/B. The short motif at 247–252 (RKKRDR) is the Nuclear localization signal element.

It belongs to the HSF family. Class B subfamily. As to quaternary structure, homotrimer. Exhibits temperature-dependent phosphorylation.

The protein localises to the nucleus. Functionally, transcriptional regulator that specifically binds DNA sequence 5'-AGAAnnTTCT-3' known as heat shock promoter elements (HSE). This is Heat stress transcription factor B-1 (HSFB1) from Arabidopsis thaliana (Mouse-ear cress).